A 461-amino-acid chain; its full sequence is Cysteine--tRNA ligase (461 aa).

Cys28 is a binding site for Zn(2+). The 'HIGH' region signature appears at Ile30–His40. Residues Cys209, His234, and Glu238 each contribute to the Zn(2+) site. Residues Lys266–Ser270 carry the 'KMSKS' region motif. Lys269 provides a ligand contact to ATP.

Belongs to the class-I aminoacyl-tRNA synthetase family. As to quaternary structure, monomer. Zn(2+) is required as a cofactor.

Its subcellular location is the cytoplasm. It catalyses the reaction tRNA(Cys) + L-cysteine + ATP = L-cysteinyl-tRNA(Cys) + AMP + diphosphate. This Pectobacterium carotovorum subsp. carotovorum (strain PC1) protein is Cysteine--tRNA ligase.